The following is a 218-amino-acid chain: N-(5'-phosphoribosyl)anthranilate isomerase (218 aa).

It belongs to the TrpF family.

It catalyses the reaction N-(5-phospho-beta-D-ribosyl)anthranilate = 1-(2-carboxyphenylamino)-1-deoxy-D-ribulose 5-phosphate. The protein operates within amino-acid biosynthesis; L-tryptophan biosynthesis; L-tryptophan from chorismate: step 3/5. In Rhodopseudomonas palustris (strain BisB18), this protein is N-(5'-phosphoribosyl)anthranilate isomerase.